The following is a 66-amino-acid chain: Cytochrome c oxidase subunit 26, mitochondrial (66 aa).

The transit peptide at 1–8 (MFFSQVLR) directs the protein to the mitochondrion. Topologically, residues 9 to 27 (SSARAAPIKRYTGGRIGES) are mitochondrial matrix. The chain crosses the membrane as a helical span at residues 28-64 (WVITEGRRLIPEIFQWSAVLSVCLGWPGAVYFFSKAR). The Mitochondrial intermembrane segment spans residues 65–66 (KA).

It belongs to the fungal cytochrome c oxidase subunit 26 family. In terms of assembly, component of the cytochrome c oxidase (complex IV, CIV), a multisubunit enzyme composed of 12 subunits. The complex is composed of a catalytic core of 3 subunits COX1, COX2 and COX3, encoded in the mitochondrial DNA, and 9 supernumerary subunits COX4, COX5A (or COX5B), COX6, COX7, COX8, COX9, COX12, COX13 and COX26, which are encoded in the nuclear genome. The complex exists as a monomer or a dimer and forms supercomplexes (SCs) in the inner mitochondrial membrane with a dimer of ubiquinol-cytochrome c oxidoreductase (cytochrome b-c1 complex, complex III, CIII), resulting in 2 different assemblies (supercomplexes III(2)IV and III(2)IV(2)).

It is found in the mitochondrion inner membrane. Component of the cytochrome c oxidase, the last enzyme in the mitochondrial electron transport chain which drives oxidative phosphorylation. The respiratory chain contains 3 multisubunit complexes succinate dehydrogenase (complex II, CII), ubiquinol-cytochrome c oxidoreductase (cytochrome b-c1 complex, complex III, CIII) and cytochrome c oxidase (complex IV, CIV), that cooperate to transfer electrons derived from NADH and succinate to molecular oxygen, creating an electrochemical gradient over the inner membrane that drives transmembrane transport and the ATP synthase. Cytochrome c oxidase is the component of the respiratory chain that catalyzes the reduction of oxygen to water. Electrons originating from reduced cytochrome c in the intermembrane space (IMS) are transferred via the dinuclear copper A center (CU(A)) of COX2 and heme A of COX1 to the active site in COX1, a binuclear center (BNC) formed by heme A3 and copper B (CU(B)). The BNC reduces molecular oxygen to 2 water molecules using 4 electrons from cytochrome c in the IMS and 4 protons from the mitochondrial matrix. The sequence is that of Cytochrome c oxidase subunit 26, mitochondrial (COX26) from Saccharomyces cerevisiae (strain ATCC 204508 / S288c) (Baker's yeast).